Reading from the N-terminus, the 460-residue chain is Centrosomal protein CEP57L1 (460 aa).

Position 49 is a phosphoserine (serine 49). 2 coiled-coil regions span residues 51–228 and 317–384; these read NSQA…EISK and ISIC…LKKH. The segment covering 399 to 410 has biased composition (polar residues); the sequence is KMSEASGIQQED. The segment at 399 to 423 is disordered; the sequence is KMSEASGIQQEDSYPKGSKNIKNSP.

Belongs to the translokin family.

The protein localises to the cytoplasm. It is found in the cytoskeleton. The protein resides in the microtubule organizing center. It localises to the centrosome. In terms of biological role, centrosomal protein which may be required for microtubule attachment to centrosomes. The polypeptide is Centrosomal protein CEP57L1 (CEP57L1) (Homo sapiens (Human)).